The chain runs to 917 residues: Smoothelin (917 aa).

N-acetylalanine is present on Ala-2. Residues 24–89 are a coiled coil; it reads LAERRRIRSA…ARLAGQLESM (66 aa). Positions 157 to 456 are disordered; the sequence is EVPEREEQEQ…AVGTAEPGGS (300 aa). Positions 177-188 are enriched in polar residues; the sequence is PEGTSQDVTTVT. Low complexity-rich tracts occupy residues 193-210 and 220-232; these read APPG…SSPT and PAEA…EVPG. Positions 233 to 243 are enriched in pro residues; the sequence is SPEPPPSPPKT. The span at 244–258 shows a compositional bias: low complexity; the sequence is TSPEPQESPTLPSTE. The span at 298 to 326 shows a compositional bias: polar residues; it reads RSLSVLSPRQPAQNRESTPLASGPSSFQR. Residues Ser-299, Ser-301, and Ser-304 each carry the phosphoserine modification. Residues 329–338 show a composition bias toward basic and acidic residues; the sequence is SVRDRVHKFT. Ser-341 carries the post-translational modification Phosphoserine. A Phosphothreonine modification is found at Thr-351. Residue Ser-357 is modified to Phosphoserine. A phosphothreonine mark is found at Thr-360 and Thr-373. The segment covering 363 to 392 has biased composition (low complexity); the sequence is RLLGPSLTSTTPASSSSGSSSRGPSDTSSR. Phosphoserine is present on residues Ser-503, Ser-514, Ser-523, and Ser-576. 2 disordered regions span residues 560 to 580 and 617 to 767; these read ANGA…PLSA and QRKR…RKAM. The stretch at 603 to 630 forms a coiled coil; sequence EERKLIRAALRELRQRKRDQRDKERERR. Positions 617-640 are enriched in basic and acidic residues; the sequence is QRKRDQRDKERERRLQEARGRPGE. Positions 676-689 are enriched in polar residues; sequence NDGTRTARTTTVES. Over residues 701–720 the composition is skewed to low complexity; that stretch reads STMMQTKTFSSSSSSKKMGS. Ser-729 bears the Phosphoserine mark. Positions 738–750 are enriched in basic and acidic residues; sequence LEKRQAEKKKELM. Residue Ser-792 is modified to Phosphoserine. Residues 799-906 enclose the Calponin-homology (CH) domain; the sequence is NSIKQMLLDW…YVQSLYNHLR (108 aa).

Belongs to the smoothelin family. Smooth muscle; contractile or vascular (for the long form).

The protein localises to the cytoplasm. The protein resides in the cytoskeleton. Structural protein of the cytoskeleton. The sequence is that of Smoothelin (SMTN) from Homo sapiens (Human).